Reading from the N-terminus, the 434-residue chain is MYKRYKDVSLILKIVIGIIVGAVLGVMVPSWSFIDVLGKLFVGALKAIAPLLVFLLIMSAISKYRSGAKNHFGTVIVLYLSATLFSSIAAVAVSYLFPIKLVLPGAMKIAESAPKDLGTVVTSLLTNAVANPISALVEGNYLAILFWSLLIGSGLRLTSAVTKKVVTELADTVSAVAQNVIQFAPFGIVGLLHESLSKTGVKGVMAYGQLLMLLVATMVFVYLVVYPFMVWLMTRKNPYPLTFWTLKVSGIPAFFTRSGAVNIPINLKASKDLGLNEESYAISIPLGGSANSGGAAITVSIMTLATANTMGVHVSIFLALLLCFLSAISATGVSGIAGGSLLLIPMAASLFGISNDIAMQVVGIGFIIGVVQDSVETAVNSASDLLFTATAEYADDRREGHPVDIRAKVKAAGKGTAEVVTPEKTNEAEESEQV.

Helical transmembrane passes span 14 to 34, 41 to 61, 72 to 92, 135 to 155, 172 to 192, 210 to 230, 282 to 302, 316 to 336, and 351 to 371; these read IVIG…WSFI, FVGA…MSAI, FGTV…AAVA, ALVE…GSGL, TVSA…VGLL, LLML…PFMV, ISIP…VSIM, IFLA…VSGI, and FGIS…IGVV. Positions 413–434 are disordered; that stretch reads GKGTAEVVTPEKTNEAEESEQV.

It belongs to the dicarboxylate/amino acid:cation symporter (DAACS) (TC 2.A.23) family.

Its subcellular location is the cell membrane. It catalyses the reaction L-serine(in) + Na(+)(in) = L-serine(out) + Na(+)(out). It carries out the reaction L-threonine(in) + Na(+)(in) = L-threonine(out) + Na(+)(out). In terms of biological role, involved in the import of serine and threonine into the cell, with the concomitant import of sodium (symport system). The protein is Serine/threonine transporter SstT of Lacticaseibacillus casei (strain BL23) (Lactobacillus casei).